The chain runs to 519 residues: Cell division cycle protein 20 homolog B (519 aa).

The tract at residues 77 to 106 (WQLSPARDPESSSSVEEGPPSHTPESLASG) is disordered. Low complexity predominate over residues 87–96 (SSSSVEEGPP). WD repeat units lie at residues 229 to 266 (RNDY…WIEN), 271 to 310 (VCCH…QLRN), 353 to 392 (YHKE…GVQG), 399 to 441 (PQST…NIQT), 443 to 484 (STQS…RSGG), and 487 to 519 (GHRD…WKCC).

The protein belongs to the WD repeat CDC20/Fizzy family. In terms of tissue distribution, expressed in multiciliated cells (MCCs).

It localises to the cytoplasm. Its function is as follows. Protein regulator of centriole-deuterosome disengagement and subsequently participates in the ciliogenesis in multiciliated cells (MCCs). This is Cell division cycle protein 20 homolog B from Mus musculus (Mouse).